The sequence spans 230 residues: Cytidylate kinase (230 aa).

12–20 is an ATP binding site; the sequence is GPSGAGKGT.

This sequence belongs to the cytidylate kinase family. Type 1 subfamily.

Its subcellular location is the cytoplasm. The enzyme catalyses CMP + ATP = CDP + ADP. It catalyses the reaction dCMP + ATP = dCDP + ADP. The chain is Cytidylate kinase from Aeromonas salmonicida (strain A449).